Reading from the N-terminus, the 138-residue chain is Small ribosomal subunit protein uS11c (138 aa).

Residues 1–24 (MTKPIPRIGSRKNGRISSRKNGRR) form a disordered region. Over residues 9-24 (GSRKNGRISSRKNGRR) the composition is skewed to basic residues.

Belongs to the universal ribosomal protein uS11 family. In terms of assembly, part of the 30S ribosomal subunit.

The protein resides in the plastid. The protein localises to the chloroplast. The chain is Small ribosomal subunit protein uS11c from Chloranthus spicatus (Chulantree).